A 148-amino-acid polypeptide reads, in one-letter code: Urease accessory protein UreE (148 aa).

This sequence belongs to the UreE family.

It is found in the cytoplasm. Involved in urease metallocenter assembly. Binds nickel. Probably functions as a nickel donor during metallocenter assembly. The chain is Urease accessory protein UreE from Halalkalibacterium halodurans (strain ATCC BAA-125 / DSM 18197 / FERM 7344 / JCM 9153 / C-125) (Bacillus halodurans).